The chain runs to 94 residues: Co-chaperonin GroES (94 aa).

It belongs to the GroES chaperonin family. In terms of assembly, heptamer of 7 subunits arranged in a ring. Interacts with the chaperonin GroEL.

The protein resides in the cytoplasm. Its function is as follows. Together with the chaperonin GroEL, plays an essential role in assisting protein folding. The GroEL-GroES system forms a nano-cage that allows encapsulation of the non-native substrate proteins and provides a physical environment optimized to promote and accelerate protein folding. GroES binds to the apical surface of the GroEL ring, thereby capping the opening of the GroEL channel. In Streptococcus pneumoniae (strain ATCC 700669 / Spain 23F-1), this protein is Co-chaperonin GroES.